The sequence spans 312 residues: DNA-directed RNA polymerase subunit alpha (312 aa).

The alpha N-terminal domain (alpha-NTD) stretch occupies residues 1 to 226 (MIEFKKPNIT…EHFKAFESAD (226 aa)). Positions 243–312 (KEKKLEMTIE…DLGLSLRQED (70 aa)) are alpha C-terminal domain (alpha-CTD).

This sequence belongs to the RNA polymerase alpha chain family. As to quaternary structure, homodimer. The RNAP catalytic core consists of 2 alpha, 1 beta, 1 beta' and 1 omega subunit. When a sigma factor is associated with the core the holoenzyme is formed, which can initiate transcription.

The catalysed reaction is RNA(n) + a ribonucleoside 5'-triphosphate = RNA(n+1) + diphosphate. Functionally, DNA-dependent RNA polymerase catalyzes the transcription of DNA into RNA using the four ribonucleoside triphosphates as substrates. The chain is DNA-directed RNA polymerase subunit alpha from Lactobacillus delbrueckii subsp. bulgaricus (strain ATCC BAA-365 / Lb-18).